The sequence spans 379 residues: Citrate synthase (379 aa).

Residues histidine 225, histidine 265, and aspartate 316 contribute to the active site.

It belongs to the citrate synthase family. As to quaternary structure, homodimer.

The enzyme catalyses oxaloacetate + acetyl-CoA + H2O = citrate + CoA + H(+). The protein operates within carbohydrate metabolism; tricarboxylic acid cycle; isocitrate from oxaloacetate: step 1/2. Its function is as follows. Might regulate the synthesis and function of enzymes involved in later enzymatic steps of Krebs cycle. This chain is Citrate synthase (citZ), found in Haloferax volcanii (strain ATCC 29605 / DSM 3757 / JCM 8879 / NBRC 14742 / NCIMB 2012 / VKM B-1768 / DS2) (Halobacterium volcanii).